Reading from the N-terminus, the 209-residue chain is dITP/XTP pyrophosphatase (209 aa).

7 to 12 contributes to the substrate binding site; the sequence is SSHGYK. Residue aspartate 70 is the Proton acceptor of the active site. Aspartate 70 serves as a coordination point for Mg(2+). Residues serine 71, 154 to 157, lysine 177, and 182 to 183 contribute to the substrate site; these read FGYD and HR.

Belongs to the HAM1 NTPase family. Homodimer. Mg(2+) is required as a cofactor.

It carries out the reaction XTP + H2O = XMP + diphosphate + H(+). It catalyses the reaction dITP + H2O = dIMP + diphosphate + H(+). The enzyme catalyses ITP + H2O = IMP + diphosphate + H(+). In terms of biological role, pyrophosphatase that catalyzes the hydrolysis of nucleoside triphosphates to their monophosphate derivatives, with a high preference for the non-canonical purine nucleotides XTP (xanthosine triphosphate), dITP (deoxyinosine triphosphate) and ITP. Seems to function as a house-cleaning enzyme that removes non-canonical purine nucleotides from the nucleotide pool, thus preventing their incorporation into DNA/RNA and avoiding chromosomal lesions. The chain is dITP/XTP pyrophosphatase from Chlamydia trachomatis serovar A (strain ATCC VR-571B / DSM 19440 / HAR-13).